We begin with the raw amino-acid sequence, 327 residues long: HTH-type transcriptional regulator EbgR (327 aa).

An HTH lacI-type domain is found at 1 to 57 (MATLKDIAIEAGVSLATVSRVLNDDPTLNVKEETKHRILEIAEKLEYKTSSARKLQT). Positions 4-23 (LKDIAIEAGVSLATVSRVLN) form a DNA-binding region, H-T-H motif.

In terms of biological role, repressor for beta galactosidase alpha and beta subunits (ebgA and ebgC). Binds lactose as an inducer. In Escherichia coli (strain K12), this protein is HTH-type transcriptional regulator EbgR (ebgR).